The chain runs to 647 residues: Zinc transporter ZIP4 (647 aa).

Positions 1 to 22 (MASLVSLELGLLLAVLVVTATA) are cleaved as a signal peptide. The Extracellular portion of the chain corresponds to 23–327 (SPPAGLLSLL…QDQLSQSERY (305 aa)). Disulfide bonds link C57–C62, C65–C111, and C160–C195. A disordered region spans residues 236–255 (EAHSDHSHRHRGASSRDPVP). N-linked (GlcNAc...) asparagine glycosylation is present at N261. An intrachain disulfide couples C270 to C309. The helical transmembrane segment at 328 to 348 (LYGSLATLLICLCAVFGLLLL) threads the bilayer. The Cytoplasmic portion of the chain corresponds to 349 to 359 (TCTGCRGVTHY). The helical transmembrane segment at 360-380 (ILQTFLSLAVGAVTGDAVLHL) threads the bilayer. Over 381 to 402 (TPKVLGLHTHSEEGLSPQPTWR) the chain is Extracellular. A helical transmembrane segment spans residues 403 to 423 (LLAMLAGLYAFFLFENLFNLL). Residues 424-498 (LPRDPEDLED…LSPELRLLPY (75 aa)) lie on the Cytoplasmic side of the membrane. The Essential for SLC39A4 endocytosis motif lies at 452-454 (LQL). Positions 458 to 484 (ELRQPKPPHEGSRADLVAEESPELLNP) are disordered. Positions 460 to 470 (RQPKPPHEGSR) are enriched in basic and acidic residues. A helical transmembrane segment spans residues 499 to 518 (MITLGDAVHNFADGLAVGAA). Residues H507, N508, and D511 each coordinate Zn(2+). At 519 to 526 (FASSWKTG) the chain is on the extracellular side. Residues 527 to 553 (LATSLAVFCHELPHELGDFAALLHAGL) form a helical membrane-spanning segment. Positions 536, 537, and 540 each coordinate Zn(2+). At 554-558 (SVRQA) the chain is on the cytoplasmic side. A helical membrane pass occupies residues 559–579 (LLLNLASALTAFAGLYVALAV). Over 580-586 (GVSEESE) the chain is Extracellular. The chain crosses the membrane as a helical span at residues 587–607 (AWILAVATGLFLYVALCDMLP). At 608-617 (AMLKVRDPRP) the chain is on the cytoplasmic side. Residues 618–638 (WLLFLLHNVGLLGGWTVLLLL) traverse the membrane as a helical segment. The Extracellular portion of the chain corresponds to 639–647 (SLYEDDITF).

This sequence belongs to the ZIP transporter (TC 2.A.5) family. As to quaternary structure, homodimer; homodimerization is mediated by the transmembrane domain. Post-translationally, the extracellular N-terminal ectodomain is cleaved when cells are Zn(2+) deficient, N-terminally cleaved SLC39A4 is internalized at a faster rate. In terms of processing, under excess Zn(2+) conditions, SLC39A4 on the cell surface is rapidly endocytosed, ubiquitinated and degraded. Glycosylated. In terms of tissue distribution, highly expressed in kidney, small intestine, stomach, colon, jejunum and duodenum.

It localises to the cell membrane. The protein localises to the recycling endosome membrane. It is found in the apical cell membrane. The enzyme catalyses Zn(2+)(in) = Zn(2+)(out). With respect to regulation, the Zn(2+) uniporter activity is regulated by zinc availability. Extracellular acidification stimulated SLC39A4-dependent Zn(2+) uptake. Functionally, selective transporter that mediates the uptake of Zn(2+). Plays an essential role for dietary zinc uptake from small intestine. The Zn(2+) uniporter activity is regulated by zinc availability. Also exhibits polyspecific binding and transport of Cu(2+), Cd(2+) and possibly Ni(2+) but at higher concentrations. This is Zinc transporter ZIP4 from Homo sapiens (Human).